Here is a 279-residue protein sequence, read N- to C-terminus: MAFQGTSRTLTQQSSAATSDELQKILFSPDAIKKMATECDLGRHHWMRADNAISVRPLVPEVTHGSIASFFKSGYDAGELRSKGYMSVPQVLCAVTRTVSTDAEGSLRIYLADLGDKELSPIDGQCVSLHNHDLPALVSFQPTYDCPMETIGNRKRCFAVVIERHGYIGYTGTTASVCSNWQARFSSKNNNYTHIAAGKTLVLPFNRLAEQTKPSAVARLLKSQLNNIESSQYVLSKAKINQNARSESEELNVESPSFAIGSSSASRSEAFRPQVVNGL.

Belongs to the cucumovirus movement protein family.

It is found in the host cell junction. Its subcellular location is the host plasmodesma. Functionally, transports viral genome to neighboring plant cells directly through plasmosdesmata, without any budding. The movement protein allows efficient cell to cell propagation, by bypassing the host cell wall barrier. Acts by forming a tubular structure at the host plasmodesmata, enlarging it enough to allow free passage of virion capsids. The chain is Movement protein from Cucumber mosaic virus (strain C7-2) (CMV).